Reading from the N-terminus, the 67-residue chain is COP9 signalosome complex subunit 9 homolog (67 aa).

Residues 1-31 form a disordered region; the sequence is MKPSLAADEMFSEGPGYMEMDESGGATGMMM.

The protein belongs to the CSN9 family. As to quaternary structure, probable component of the COP9 signalosome (CSN) complex.

Component of the COP9 signalosome complex (CSN), a complex involved in various cellular and developmental processes. The CSN complex is an essential regulator of the ubiquitin (Ubl) conjugation pathway by mediating the deneddylation of the cullin subunits of SCF-type E3 ligase complexes, leading to decrease the Ubl ligase activity. This Drosophila melanogaster (Fruit fly) protein is COP9 signalosome complex subunit 9 homolog.